The primary structure comprises 320 residues: Ferrochelatase (320 aa).

H194 and E275 together coordinate Fe cation.

The protein belongs to the ferrochelatase family. Monomer.

Its subcellular location is the cytoplasm. It carries out the reaction heme b + 2 H(+) = protoporphyrin IX + Fe(2+). It participates in porphyrin-containing compound metabolism; protoheme biosynthesis; protoheme from protoporphyrin-IX: step 1/1. Catalyzes the ferrous insertion into protoporphyrin IX. The sequence is that of Ferrochelatase from Escherichia coli (strain SMS-3-5 / SECEC).